The primary structure comprises 498 residues: ATP synthase subunit beta, chloroplastic (498 aa).

Phosphothreonine is present on threonine 6. Serine 13 carries the phosphoserine modification. Residue 172–179 (GGAGVGKT) participates in ATP binding.

It belongs to the ATPase alpha/beta chains family. As to quaternary structure, F-type ATPases have 2 components, CF(1) - the catalytic core - and CF(0) - the membrane proton channel. CF(1) has five subunits: alpha(3), beta(3), gamma(1), delta(1), epsilon(1). CF(0) has four main subunits: a(1), b(1), b'(1) and c(9-12).

Its subcellular location is the plastid. It is found in the chloroplast thylakoid membrane. The enzyme catalyses ATP + H2O + 4 H(+)(in) = ADP + phosphate + 5 H(+)(out). Functionally, produces ATP from ADP in the presence of a proton gradient across the membrane. The catalytic sites are hosted primarily by the beta subunits. This chain is ATP synthase subunit beta, chloroplastic, found in Nasturtium officinale (Watercress).